The chain runs to 365 residues: MTYFDPKIQESDFALSSYDYTLPFSAIAQNPANPRERAKLLIYQRDSGRIIHSDFYHFCDFVPKDTLLVFNDTRVIKARIYAHKLDCNTQKLSDKTFEIFYHKPLQSTSSAIPLFLVQIKGRVKCGDKLLINTDSTNPFLIAQVQECLDNGLRVVSFMQNEHALEYIQVLDMLEKYGHTPLPPYIKREDSCQDAHFYQSVFSKQLGSIAAPTASLHFSKESIESIKAQFETCFLTLHIGAGTFMNVESADIRHHLIHKEFFSLSPQSAAAIQNAHKVLCIGTTSARCVEYYARYKILQGECDIFLYPSKSFKRVDYLLTNFHLPKSTLMMLVSAMVGREKCLELYKLALEKGYRFYSYGDGMLIL.

Belongs to the QueA family. In terms of assembly, monomer.

The protein resides in the cytoplasm. It carries out the reaction 7-aminomethyl-7-carbaguanosine(34) in tRNA + S-adenosyl-L-methionine = epoxyqueuosine(34) in tRNA + adenine + L-methionine + 2 H(+). Its pathway is tRNA modification; tRNA-queuosine biosynthesis. Functionally, transfers and isomerizes the ribose moiety from AdoMet to the 7-aminomethyl group of 7-deazaguanine (preQ1-tRNA) to give epoxyqueuosine (oQ-tRNA). The chain is S-adenosylmethionine:tRNA ribosyltransferase-isomerase from Helicobacter hepaticus (strain ATCC 51449 / 3B1).